A 467-amino-acid polypeptide reads, in one-letter code: 3-isopropylmalate dehydratase large subunit (467 aa).

The [4Fe-4S] cluster site is built by C347, C407, and C410.

This sequence belongs to the aconitase/IPM isomerase family. LeuC type 1 subfamily. In terms of assembly, heterodimer of LeuC and LeuD. [4Fe-4S] cluster serves as cofactor.

It catalyses the reaction (2R,3S)-3-isopropylmalate = (2S)-2-isopropylmalate. It functions in the pathway amino-acid biosynthesis; L-leucine biosynthesis; L-leucine from 3-methyl-2-oxobutanoate: step 2/4. Catalyzes the isomerization between 2-isopropylmalate and 3-isopropylmalate, via the formation of 2-isopropylmaleate. This is 3-isopropylmalate dehydratase large subunit from Trichormus variabilis (strain ATCC 29413 / PCC 7937) (Anabaena variabilis).